A 254-amino-acid polypeptide reads, in one-letter code: Phosphatidylglycerophosphatase B (254 aa).

Residues R2–I24 traverse the membrane as a helical segment. Over S25–V54 the chain is Periplasmic. Residues I55–W66 traverse the membrane as a helical segment. Over C67–R71 the chain is Cytoplasmic. The helical transmembrane segment at I72 to S94 threads the bilayer. The Periplasmic portion of the chain corresponds to W95–S161. Positions K97 to P105 are phosphatase sequence motif I. Residues P160–H163 form a phosphatase sequence motif II region. Residues G162–G176 traverse the membrane as a helical segment. H163 serves as the catalytic Proton donor; for a subset of substrates. Residues L177 to R182 lie on the Cytoplasmic side of the membrane. Residues R183–L202 form a helical membrane-spanning segment. The tract at residues S200–D211 is phosphatase sequence motif III. At L203–W208 the chain is on the periplasmic side. Residue H207 is the Nucleophile of the active site. A helical transmembrane segment spans residues P209 to R232. Topologically, residues I233–S254 are cytoplasmic.

The protein belongs to the PA-phosphatase related phosphoesterase family. The N-terminus is blocked.

Its subcellular location is the cell inner membrane. The protein localises to the cell outer membrane. The enzyme catalyses a 1,2-diacyl-sn-glycero-3-phospho-(1'-sn-glycero-3'-phosphate) + H2O = a 1,2-diacyl-sn-glycero-3-phospho-(1'-sn-glycerol) + phosphate. It carries out the reaction a 1,2-diacyl-sn-glycerol 3-diphosphate + H2O = a 1,2-diacyl-sn-glycero-3-phosphate + phosphate + H(+). The catalysed reaction is a 1,2-diacyl-sn-glycero-3-phosphate + H2O = a 1,2-diacyl-sn-glycerol + phosphate. It catalyses the reaction di-trans,octa-cis-undecaprenyl diphosphate + H2O = di-trans,octa-cis-undecaprenyl phosphate + phosphate + H(+). It functions in the pathway phospholipid metabolism; phosphatidylglycerol biosynthesis; phosphatidylglycerol from CDP-diacylglycerol: step 2/2. Functionally, catalyzes the dephosphorylation of diacylglycerol diphosphate (DGPP) to phosphatidate (PA) and the subsequent dephosphorylation of PA to diacylglycerol (DAG). Also has undecaprenyl pyrophosphate phosphatase activity, required for the biosynthesis of the lipid carrier undecaprenyl phosphate. Can also use lysophosphatidic acid (LPA) and phosphatidylglycerophosphate as substrates. The pattern of activities varies according to subcellular location, PGP phosphatase activity is higher in the cytoplasmic membrane, whereas PA and LPA phosphatase activities are higher in the outer membrane. Activity is independent of a divalent cation ion and insensitive to inhibition by N-ethylmaleimide. This is Phosphatidylglycerophosphatase B (pgpB) from Escherichia coli O157:H7.